Here is a 417-residue protein sequence, read N- to C-terminus: Interferon-gamma-inducible GTPase 10 (417 aa).

Residue glycine 2 is the site of N-myristoyl glycine attachment. Residues 67 to 249 (APLNIAVTGE…PSLESTLLEE (183 aa)) enclose the IRG-type G domain. The GDP site is built by glycine 78, alanine 79, serine 82, threonine 83, serine 101, lysine 183, aspartate 185, and serine 231. A run of 2 helical transmembrane segments spans residues 284–302 (EALKAGASATIPMMSFFND) and 370–387 (AVTGGFVATGLYFRKSYY).

The protein belongs to the TRAFAC class dynamin-like GTPase superfamily. GB1/RHD3 GTPase family. GB1 subfamily. In terms of assembly, homooligomer; homooligomerization occurs upon GTP-binding and is required for the association with membranous structures. Homodimer; GDP-binding induces formation of an inactive head-to-head homodimer. In terms of processing, myristoylation is required for localization to pathogen-containing vacuoles. (Microbial infection) Phosphorylated by Toxoplasma gondii ROP18.

The protein localises to the membrane. The protein resides in the cytoplasmic vesicle membrane. It catalyses the reaction GTP + H2O = GDP + phosphate + H(+). Interferon (IFN)-inducible GTPase that plays important roles in innate immunity against a diverse range of bacterial, viral and protozoan pathogens by mediating cytosolic release of pathogenic ligands that activate the inflammasomes. Following infection, recruited to the membrane of pathogens in a GBP-dependent manner and mediates disruption of the pathogen membrane, liberating ligands that are detected by inflammasomes, such as lipopolysaccharide (LPS) that activates the non-canonical CASP4/CASP11 inflammasome or double-stranded DNA (dsDNA) that activates the AIM2 inflammasome. Promotes AIM2 and NLRP3 inflammasome activation following A.fumigatus infection by liberating beta-glucan, which directly triggers inflammasome assembly. Promotes NLRP3 inflammasome activation following influenza A virus infection. This Mus musculus (Mouse) protein is Interferon-gamma-inducible GTPase 10.